The following is an 84-amino-acid chain: UPF0457 protein BT9727_3043 (84 aa).

The protein belongs to the UPF0457 family.

The protein is UPF0457 protein BT9727_3043 of Bacillus thuringiensis subsp. konkukian (strain 97-27).